A 1511-amino-acid polypeptide reads, in one-letter code: Bifunctional glutamate/proline--tRNA ligase (1511 aa).

Residues glycine 164–alanine 758 form a glutamate--tRNA ligase region. A 'HIGH' region motif is present at residues proline 204–histidine 214. The tract at residues alanine 296–serine 315 is disordered. A compositionally biased stretch (basic and acidic residues) spans methionine 299 to serine 315. N6-acetyllysine; alternate is present on lysine 300. Residue lysine 300 is modified to N6-malonyllysine; alternate. The residue at position 355 (threonine 355) is a Phosphothreonine. Lysine 417 bears the N6-acetyllysine mark. The 'KMSKS' region motif lies at valine 432–arginine 436. A Phosphoserine modification is found at serine 434. Lysine 498, lysine 535, lysine 542, and lysine 637 each carry N6-acetyllysine. The span at lysine 708–threonine 728 shows a compositional bias: basic and acidic residues. Positions lysine 708–serine 741 are disordered. Serine 746 carries the phosphoserine modification. The WHEP-TRS 1 domain maps to glutamate 748–proline 804. The 3 X 57 AA approximate repeats stretch occupies residues glutamine 759–threonine 955. At lysine 787 the chain carries N6-acetyllysine. Residues threonine 794–arginine 823 form a disordered region. Over residues alanine 807–leucine 816 the composition is skewed to polar residues. The 57-residue stretch at glutamate 821–proline 877 folds into the WHEP-TRS 2 domain. N6-acetyllysine is present on lysine 860. Disordered regions lie at residues glycine 868–leucine 903 and valine 952–leucine 1015. Tyrosine 871 is subject to Phosphotyrosine. The segment covering proline 877–alanine 890 has biased composition (low complexity). Phosphoserine; by CDK5 is present on serine 885. Threonine 897 carries the phosphothreonine modification. A WHEP-TRS 3 domain is found at glutamate 899–threonine 955. Basic and acidic residues predominate over residues serine 957–asparagine 975. Residues glutamine 992 to glutamine 1005 show a composition bias toward gly residues. Position 997 is a phosphoserine (serine 997). The residue at position 998 (serine 998) is a Phosphoserine; by RPS6KB1. Serine 999 is subject to Phosphoserine. The interval glycine 1006–tyrosine 1511 is proline--tRNA ligase. Residues threonine 1120–glutamate 1122 and arginine 1151 each bind L-proline. Residues arginine 1151, glutamate 1153, arginine 1162, threonine 1163, glutamine 1236, and threonine 1239 each coordinate ATP. Arginine 1151 bears the Omega-N-methylarginine mark. Position 1236 (glutamine 1236) interacts with Mg(2+). Histidine 1241 contributes to the L-proline binding site. Residues threonine 1275 and arginine 1277 each coordinate ATP. Serine 1349 carries the post-translational modification Phosphoserine. Cysteine 1447, cysteine 1452, cysteine 1494, and cysteine 1496 together coordinate Zn(2+). N6-acetyllysine is present on lysine 1502.

The protein in the N-terminal section; belongs to the class-I aminoacyl-tRNA synthetase family. Glutamate--tRNA ligase type 2 subfamily. In the C-terminal section; belongs to the class-II aminoacyl-tRNA synthetase family. Homodimer. Part of the aminoacyl-tRNA synthetase multienzyme complex, also know as multisynthetase complex, that is composed of the tRNA ligases for Arg (RARS1), Asp (DARS1), Gln (QARS1), Ile (IARS1), Leu (LARS1), Lys (KARS1), Met (MARS1) the bifunctional ligase for Glu and Pro (EPRS1) and the auxiliary subunits AIMP1/p43, AIMP2/p38 and EEF1E1/p18. Forms a linear complex that contains MARS1, EEF1E1, EPRS1 and AIMP2 that is at the core of the multisubunit complex. Interacts with TARS3. Interacts with DUS2L. Component of the GAIT complex which is composed of EPRS1, RPL13A and GAPDH. Interacts (phosphorylated at Ser-998) with SLC27A1; mediates the translocation of SLC27A1 from the cytoplasm to the plasma membrane thereby increasing the uptake of long-chain fatty acids. In terms of processing, phosphorylated at Ser-998 by RPS6KB1; triggers EPRS1 release from the aminoacyl-tRNA synthetase multienzyme complex. In monocytes, the IFN-gamma-induced phosphorylation at Ser-998 releases EPRS1 from the aminoacyl-tRNA synthetase multienzyme complex, allowing its association with the GAIT complex. Phosphorylation at Ser-998 is specifically required for the RPL13A-mediated interaction of the GAIT complex with eIF4G. Phosphorylation at Ser-998 by RPS6KB1, is also induced by insulin through activation of the mTORC1 signaling pathway and promotes the interaction of EPRS1 with SLC27A1.

It localises to the cytoplasm. The protein resides in the cytosol. The protein localises to the membrane. The enzyme catalyses tRNA(Glu) + L-glutamate + ATP = L-glutamyl-tRNA(Glu) + AMP + diphosphate. It catalyses the reaction tRNA(Pro) + L-proline + ATP = L-prolyl-tRNA(Pro) + AMP + diphosphate. Its function is as follows. Multifunctional protein which primarily functions within the aminoacyl-tRNA synthetase multienzyme complex, also known as multisynthetase complex. Within the complex it catalyzes the attachment of both L-glutamate and L-proline to their cognate tRNAs in a two-step reaction where the amino acid is first activated by ATP to form a covalent intermediate with AMP. Subsequently, the activated amino acid is transferred to the acceptor end of the cognate tRNA to form L-glutamyl-tRNA(Glu) and L-prolyl-tRNA(Pro). Upon interferon-gamma stimulation, EPRS1 undergoes phosphorylation, causing its dissociation from the aminoacyl-tRNA synthetase multienzyme complex. It is recruited to form the GAIT complex, which binds to stem loop-containing GAIT elements found in the 3'-UTR of various inflammatory mRNAs, such as ceruloplasmin. The GAIT complex inhibits the translation of these mRNAs, allowing interferon-gamma to redirect the function of EPRS1 from protein synthesis to translation inhibition in specific cell contexts. Furthermore, it can function as a downstream effector in the mTORC1 signaling pathway, by promoting the translocation of SLC27A1 from the cytoplasm to the plasma membrane where it mediates the uptake of long-chain fatty acid by adipocytes. Thereby, EPRS1 also plays a role in fat metabolism and more indirectly influences lifespan. The chain is Bifunctional glutamate/proline--tRNA ligase from Cricetulus griseus (Chinese hamster).